Consider the following 245-residue polypeptide: MIIPAIDLIDGNVVRLYQGDYGQQTTFDLSPLAQLQSYEAQGAKWLHIVDLTGAKDPAKRQTRLISELVAELNANIQVGGGIRTEEQVTELLAIGVKRVVIGSLAVKEPELVKQWFIKYGSEAICLALDVNINQSGEKMVAVSGWQSGGGKSLESLVETFSAVGLKHALVTDISRDGTLTGANTALYQEIAAIYPDIAWQASGGIATLEDVAAVRDSGAAGIIIGKALLINQFNVAEAIQCWPND.

Aspartate 7 functions as the Proton acceptor in the catalytic mechanism. Catalysis depends on aspartate 129, which acts as the Proton donor.

This sequence belongs to the HisA/HisF family.

The protein localises to the cytoplasm. The enzyme catalyses 1-(5-phospho-beta-D-ribosyl)-5-[(5-phospho-beta-D-ribosylamino)methylideneamino]imidazole-4-carboxamide = 5-[(5-phospho-1-deoxy-D-ribulos-1-ylimino)methylamino]-1-(5-phospho-beta-D-ribosyl)imidazole-4-carboxamide. It functions in the pathway amino-acid biosynthesis; L-histidine biosynthesis; L-histidine from 5-phospho-alpha-D-ribose 1-diphosphate: step 4/9. The sequence is that of 1-(5-phosphoribosyl)-5-[(5-phosphoribosylamino)methylideneamino] imidazole-4-carboxamide isomerase from Shewanella putrefaciens (strain CN-32 / ATCC BAA-453).